Consider the following 600-residue polypeptide: Keratin, type II cuticular Hb4 (600 aa).

Residues 1-165 (MSCRSYRVSS…PNAQRVKKDE (165 aa)) form a head region. Positions 165–476 (EKEQIKTLNN…RLLEGEESRL (312 aa)) constitute an IF rod domain. Residues 166-200 (KEQIKTLNNKFASFIDKVRFLEQQNKLLETKWSFL) are coil 1A. Residues 201–210 (QEQKCIRSNL) are linker 1. A coil 1B region spans residues 211-311 (EPLFESYITN…YMEEIQLLQS (101 aa)). Positions 312 to 328 (HISETSVIVKMDNSRDL) are linker 12. The tract at residues 329–472 (NLDGIIAEVK…ATYRRLLEGE (144 aa)) is coil 2. The tail stretch occupies residues 473–600 (ESRLCEGVGP…STTTSCRTKY (128 aa)).

Belongs to the intermediate filament family. As to quaternary structure, heterotetramer of two type I and two type II keratins. As to expression, expressed in the hair follicles.

The protein is Keratin, type II cuticular Hb4 (KRT84) of Homo sapiens (Human).